Consider the following 573-residue polypeptide: DNA damage-binding protein CMR1 (573 aa).

Residues 27 to 94 are disordered; the sequence is DSLNDSISRE…EMEKAEERKR (68 aa). A coiled-coil region spans residues 72 to 152; sequence TMEDSEEDKQ…EEIKKEEDST (81 aa). Residues 79–94 show a composition bias toward basic and acidic residues; the sequence is DKQMREEMEKAEERKR. WD repeat units follow at residues 218–259, 268–308, 319–357, 361–401, 418–456, 495–538, and 542–573; these read ITQQ…DDET, PHGK…STEV, DYPL…KQGE, LHDK…QKNS, HSRL…KLPL, GRWV…LCHL, and DRMT…YLFE.

This sequence belongs to the WD repeat DDB2/WDR76 family.

Its function is as follows. DNA-binding protein that binds to both single- and double-stranded DNA. Binds preferentially to UV-damaged DNA. May be involved in DNA-metabolic processes. The sequence is that of DNA damage-binding protein CMR1 from Meyerozyma guilliermondii (strain ATCC 6260 / CBS 566 / DSM 6381 / JCM 1539 / NBRC 10279 / NRRL Y-324) (Yeast).